The chain runs to 39 residues: Cytochrome b559 subunit beta (39 aa).

The chain crosses the membrane as a helical span at residues 14–30 (WLAVHGLAIPTVFFLGS). Histidine 18 provides a ligand contact to heme.

Belongs to the PsbE/PsbF family. Heterodimer of an alpha subunit and a beta subunit. PSII is composed of 1 copy each of membrane proteins PsbA, PsbB, PsbC, PsbD, PsbE, PsbF, PsbH, PsbI, PsbJ, PsbK, PsbL, PsbM, PsbT, PsbX, PsbY, PsbZ, Psb30/Ycf12, at least 3 peripheral proteins of the oxygen-evolving complex and a large number of cofactors. It forms dimeric complexes. Requires heme b as cofactor.

It localises to the plastid membrane. This b-type cytochrome is tightly associated with the reaction center of photosystem II (PSII). PSII is a light-driven water:plastoquinone oxidoreductase that uses light energy to abstract electrons from H(2)O, generating O(2) and a proton gradient subsequently used for ATP formation. It consists of a core antenna complex that captures photons, and an electron transfer chain that converts photonic excitation into a charge separation. This Cuscuta gronovii (Common dodder) protein is Cytochrome b559 subunit beta.